The primary structure comprises 593 residues: Aspartate--tRNA(Asp/Asn) ligase (593 aa).

E173 lines the L-aspartate pocket. Residues 197–200 (QLFK) are aspartate. R219 is a binding site for L-aspartate. ATP is bound by residues 219–221 (RDE) and Q228. Residue H451 coordinates L-aspartate. An ATP-binding site is contributed by E485. R492 contributes to the L-aspartate binding site. 537–540 (GIDR) contacts ATP.

The protein belongs to the class-II aminoacyl-tRNA synthetase family. Type 1 subfamily. As to quaternary structure, homodimer.

The protein localises to the cytoplasm. The catalysed reaction is tRNA(Asx) + L-aspartate + ATP = L-aspartyl-tRNA(Asx) + AMP + diphosphate. Its function is as follows. Aspartyl-tRNA synthetase with relaxed tRNA specificity since it is able to aspartylate not only its cognate tRNA(Asp) but also tRNA(Asn). Reaction proceeds in two steps: L-aspartate is first activated by ATP to form Asp-AMP and then transferred to the acceptor end of tRNA(Asp/Asn). The chain is Aspartate--tRNA(Asp/Asn) ligase from Legionella pneumophila (strain Paris).